A 78-amino-acid chain; its full sequence is Acyl carrier protein (78 aa).

The Carrier domain occupies 2–77 (SDIAERVKKI…DAIKYIGENM (76 aa)). Position 37 is an O-(pantetheine 4'-phosphoryl)serine (serine 37).

It belongs to the acyl carrier protein (ACP) family. Post-translationally, 4'-phosphopantetheine is transferred from CoA to a specific serine of apo-ACP by AcpS. This modification is essential for activity because fatty acids are bound in thioester linkage to the sulfhydryl of the prosthetic group.

The protein resides in the cytoplasm. It functions in the pathway lipid metabolism; fatty acid biosynthesis. Carrier of the growing fatty acid chain in fatty acid biosynthesis. The protein is Acyl carrier protein of Magnetococcus marinus (strain ATCC BAA-1437 / JCM 17883 / MC-1).